Consider the following 427-residue polypeptide: Histidinol dehydrogenase (427 aa).

Positions 232, 254, and 257 each coordinate substrate. Positions 254 and 257 each coordinate Zn(2+). Active-site proton acceptor residues include E322 and H323. The substrate site is built by H323, D356, E410, and H415. Residue D356 participates in Zn(2+) binding. H415 contributes to the Zn(2+) binding site.

The protein belongs to the histidinol dehydrogenase family. Requires Zn(2+) as cofactor.

It catalyses the reaction L-histidinol + 2 NAD(+) + H2O = L-histidine + 2 NADH + 3 H(+). Its pathway is amino-acid biosynthesis; L-histidine biosynthesis; L-histidine from 5-phospho-alpha-D-ribose 1-diphosphate: step 9/9. Its function is as follows. Catalyzes the sequential NAD-dependent oxidations of L-histidinol to L-histidinaldehyde and then to L-histidine. The sequence is that of Histidinol dehydrogenase from Listeria monocytogenes serotype 4b (strain F2365).